The sequence spans 311 residues: Peptide methionine sulfoxide reductase MsrA/MsrB 2 (311 aa).

Positions 1–155 (MHEIYLAGGC…PNGYCHINVN (155 aa)) are peptide methionine sulfoxide reductase A. The active site involves Cys10. Residues 172 to 295 (DEELKKTLSP…NSLSIRFIPK (124 aa)) enclose the MsrB domain. Cys284 functions as the Nucleophile in the catalytic mechanism.

The protein in the N-terminal section; belongs to the MsrA Met sulfoxide reductase family. In the C-terminal section; belongs to the MsrB Met sulfoxide reductase family.

It catalyses the reaction L-methionyl-[protein] + [thioredoxin]-disulfide + H2O = L-methionyl-(S)-S-oxide-[protein] + [thioredoxin]-dithiol. It carries out the reaction [thioredoxin]-disulfide + L-methionine + H2O = L-methionine (S)-S-oxide + [thioredoxin]-dithiol. The catalysed reaction is L-methionyl-[protein] + [thioredoxin]-disulfide + H2O = L-methionyl-(R)-S-oxide-[protein] + [thioredoxin]-dithiol. Its function is as follows. Has an important function as a repair enzyme for proteins that have been inactivated by oxidation. Catalyzes the reversible oxidation-reduction of methionine sulfoxide in proteins to methionine. This Streptococcus pneumoniae serotype 4 (strain ATCC BAA-334 / TIGR4) protein is Peptide methionine sulfoxide reductase MsrA/MsrB 2 (msrAB2).